We begin with the raw amino-acid sequence, 193 residues long: C-type lectin domain family 3 member A homolog (193 aa).

The N-terminal stretch at 1–24 (MAQAGLLIWLFFTILLLDLTCTQS) is a signal peptide. 3 disulfide bridges follow: Cys66/Cys76, Cys93/Cys188, and Cys164/Cys180. In terms of domain architecture, C-type lectin spans 72–189 (IHKKCYLSFE…CRSLKKYICE (118 aa)).

It is found in the secreted. This chain is C-type lectin domain family 3 member A homolog (clec3a), found in Xenopus laevis (African clawed frog).